The following is a 510-amino-acid chain: 2-isopropylmalate synthase (510 aa).

Residues 5-267 (LVIFDTTLRD…DTRIDTTQIV (263 aa)) enclose the Pyruvate carboxyltransferase domain. Residues Asp-14, His-202, His-204, and Asn-238 each coordinate Mn(2+). Residues 392–510 (RLLSLHAVSE…SSLERTHPQI (119 aa)) are regulatory domain.

The protein belongs to the alpha-IPM synthase/homocitrate synthase family. LeuA type 1 subfamily. Homodimer. Requires Mn(2+) as cofactor.

The protein resides in the cytoplasm. The catalysed reaction is 3-methyl-2-oxobutanoate + acetyl-CoA + H2O = (2S)-2-isopropylmalate + CoA + H(+). It functions in the pathway amino-acid biosynthesis; L-leucine biosynthesis; L-leucine from 3-methyl-2-oxobutanoate: step 1/4. Its function is as follows. Catalyzes the condensation of the acetyl group of acetyl-CoA with 3-methyl-2-oxobutanoate (2-ketoisovalerate) to form 3-carboxy-3-hydroxy-4-methylpentanoate (2-isopropylmalate). The polypeptide is 2-isopropylmalate synthase (Nitrosomonas europaea (strain ATCC 19718 / CIP 103999 / KCTC 2705 / NBRC 14298)).